The primary structure comprises 348 residues: Fructose-1,6-bisphosphatase class 1 (348 aa).

The Mg(2+) site is built by Glu104, Asp126, Leu128, and Asp129. Substrate contacts are provided by residues Asp129–Ser132, Asn221, Tyr249, and Lys279. Glu285 lines the Mg(2+) pocket.

This sequence belongs to the FBPase class 1 family. As to quaternary structure, homotetramer. It depends on Mg(2+) as a cofactor.

The protein localises to the cytoplasm. It catalyses the reaction beta-D-fructose 1,6-bisphosphate + H2O = beta-D-fructose 6-phosphate + phosphate. It functions in the pathway carbohydrate biosynthesis; Calvin cycle. This is Fructose-1,6-bisphosphatase class 1 from Thermosynechococcus vestitus (strain NIES-2133 / IAM M-273 / BP-1).